A 237-amino-acid chain; its full sequence is Proteasome subunit alpha type-5-A (237 aa).

N-acetylmethionine is present on Met-1. Glycyl lysine isopeptide (Lys-Gly) (interchain with G-Cter in ubiquitin) cross-links involve residues Lys-43 and Lys-66.

Belongs to the peptidase T1A family. Component of the 20S core complex of the 26S proteasome. The 26S proteasome is composed of a core protease (CP), known as the 20S proteasome, capped at one or both ends by the 19S regulatory particle (RP/PA700). The 20S proteasome core is composed of 28 subunits that are arranged in four stacked rings, resulting in a barrel-shaped structure. The two end rings are each formed by seven alpha subunits, and the two central rings are each formed by seven beta subunits. The catalytic chamber with the active sites is on the inside of the barrel.

The protein resides in the cytoplasm. Its subcellular location is the nucleus. In terms of biological role, the proteasome is a multicatalytic proteinase complex which is characterized by its ability to cleave peptides with Arg, Phe, Tyr, Leu, and Glu adjacent to the leaving group at neutral or slightly basic pH. The proteasome has an ATP-dependent proteolytic activity. This Arabidopsis thaliana (Mouse-ear cress) protein is Proteasome subunit alpha type-5-A (PAE1).